We begin with the raw amino-acid sequence, 438 residues long: UPF0229 protein NGR_c12350 (438 aa).

Basic and acidic residues predominate over residues 1-16 (MPNFIDRRLNPKDKSL). Disordered regions lie at residues 1-20 (MPNF…GNRQ) and 83-107 (FAAG…GTGQ). Positions 94-105 (SGGGATGAGAGT) are enriched in gly residues.

It belongs to the UPF0229 family.

This chain is UPF0229 protein NGR_c12350, found in Sinorhizobium fredii (strain NBRC 101917 / NGR234).